Here is a 321-residue protein sequence, read N- to C-terminus: NADPH-dependent codeinone reductase 1-5 (321 aa).

Residues T27 and D51 each contribute to the NADPH site. Active-site proton donor residues include Y56 and H119. A substrate-binding site is contributed by H119. Residues Q187, S214, L216, S264, and R269 each contribute to the NADPH site.

This sequence belongs to the aldo/keto reductase family. In terms of tissue distribution, latex secreting cells (laticifer cells). Expressed constitutively and ubiquitously with highest levels in capsules.

The protein resides in the cytoplasm. The protein localises to the cytosol. It catalyses the reaction codeine + NADP(+) = codeinone + NADPH + H(+). It carries out the reaction neopine + NADP(+) = neopinone + NADPH + H(+). The catalysed reaction is morphine + NADP(+) = morphinone + NADPH + H(+). The enzyme catalyses neomorphine + NADP(+) = neomorphinone + NADPH + H(+). It participates in alkaloid biosynthesis; morphine biosynthesis. In terms of biological role, NADPH-dependent codeinone reductase involved in biosynthesis of morphinan-type benzylisoquinoline and opiate alkaloids natural products. Reduces codeinone to codeine in the penultimate step in morphine biosynthesis. Can use morphinone, hydrocodone and hydromorphone as substrate during reductive reaction with NADPH as cofactor, and morphine and dihydrocodeine as substrate during oxidative reaction with NADP as cofactor. Converts morphinone to morphine, and neomorphinone to neomorphine. Reduces irreversibly neopinone, a spontaneous isomer of codeinone, to neopine; in planta, neopine levels are limited to low levels. In Papaver somniferum (Opium poppy), this protein is NADPH-dependent codeinone reductase 1-5.